A 966-amino-acid chain; its full sequence is Serine/threonine-protein kinase 10 (966 aa).

A phosphoserine mark is found at Ser-13 and Ser-20. Residues 36–294 (WEIVGELGDG…AAQLLQHPFV (259 aa)) enclose the Protein kinase domain. ATP contacts are provided by residues 42–50 (LGDGAFGKV) and Lys-65. Residue Asp-157 is the Proton acceptor of the active site. An activation segment region spans residues 175 to 224 (DFGVSAKNLKTLQKRDSFIGTPYWMAPEVVLCETMKDAPYDYKADIWSLG). Thr-185 is subject to Phosphothreonine; by autocatalysis. Ser-191 is subject to Phosphoserine. Polar residues-rich tracts occupy residues 341–363 (TQDSANVTQPSLDSNKLLQDSST) and 371–392 (QEPVSGSCSQPSGDGPLQTTSP). The tract at residues 341–497 (TQDSANVTQP…NLSTSESMDY (157 aa)) is disordered. Residues 421-430 (IQMDEEKQIP) are compositionally biased toward basic and acidic residues. 4 positions are modified to phosphoserine: Ser-437, Ser-449, Ser-453, and Ser-484. Residues 438–456 (PAASKSQKANQSRPNSSAL) are compositionally biased toward polar residues. Over residues 485–497 (DCSNLSTSESMDY) the composition is skewed to polar residues. Phosphoserine is present on residues Ser-513 and Ser-548. Residues 588–936 (LQLEQMHKRF…LNQKKREQEM (349 aa)) are a coiled coil. Disordered stretches follow at residues 660 to 692 (KKEVKSEVEKLPRQQRKESMKQKMEEHSQKKQR), 826 to 865 (INGAGSASEQREKIKQFSQQEEKRQKAERLQQQQKHENQM), and 901 to 966 (LDES…GDAS). Basic and acidic residues-rich tracts occupy residues 834 to 865 (EQREKIKQFSQQEEKRQKAERLQQQQKHENQM) and 901 to 946 (LDES…EAEP). Residue Thr-950 is modified to Phosphothreonine. The span at 950 to 966 (TPSKASNFFPYSSGDAS) shows a compositional bias: polar residues.

Belongs to the protein kinase superfamily. STE Ser/Thr protein kinase family. STE20 subfamily. Homodimer; homodimerization is required for activation segment autophosphorylation. Post-translationally, autophosphorylates following homodimerization, leading to activation of the protein. In terms of tissue distribution, expressed predominantly in lymphoid organs such as spleen, thymus, and bone marrow.

It is found in the cell membrane. The catalysed reaction is L-seryl-[protein] + ATP = O-phospho-L-seryl-[protein] + ADP + H(+). It catalyses the reaction L-threonyl-[protein] + ATP = O-phospho-L-threonyl-[protein] + ADP + H(+). With respect to regulation, inhibited by the pyrrole-indolinone inhibitor SU11274 (K00593): intercalates between the ATP-binding Lys-65 and alpha-C glutamate (Glu-81), resulting in a partial disordering of the lysine side chain. Also specifically inhibited by erlotinib. Slightly inhibited by gefitinib. Functionally, serine/threonine-protein kinase involved in regulation of lymphocyte migration. Phosphorylates MSN, and possibly PLK1. Involved in regulation of lymphocyte migration by mediating phosphorylation of ERM proteins such as MSN. Acts as a negative regulator of MAP3K1/MEKK1. May also act as a cell cycle regulator by acting as a polo kinase kinase: mediates phosphorylation of PLK1 in vitro; however such data require additional evidences in vivo. This is Serine/threonine-protein kinase 10 (Stk10) from Mus musculus (Mouse).